We begin with the raw amino-acid sequence, 135 residues long: Early nodulin-5 (135 aa).

An N-terminal signal peptide occupies residues 1–23 (MASSSSPIFLMIIFSMWLLFSYS).

Invasion zone and early symbiotic zone.

Involved in the infection process during the plant-rhizobium interaction. This is Early nodulin-5 (ENOD5) from Pisum sativum (Garden pea).